The primary structure comprises 68 residues: Beta-defensin 1 (68 aa).

Positions 1–21 (MRTSYLLLFTLCLLLSEMASG) are cleaved as a signal peptide. Positions 22–32 (DNFLTGLGHRS) are excised as a propeptide. Disulfide bonds link C37–C66, C44–C59, and C49–C67.

The protein belongs to the beta-defensin family. As to quaternary structure, monomer. Homodimer.

It localises to the secreted. Its subcellular location is the membrane. Functionally, has bactericidal activity. May act as a ligand for C-C chemokine receptor CCR6. Positively regulates the sperm motility and bactericidal activity in a CCR6-dependent manner. Binds to CCR6 and triggers Ca2+ mobilization in the sperm which is important for its motility. This chain is Beta-defensin 1 (DEFB1), found in Cercopithecus erythrogaster (Red-bellied monkey).